The primary structure comprises 452 residues: Histone acetyltransferase type B subunit 2 (452 aa).

WD repeat units follow at residues 155–195 (YEDG…NSKE), 205–245 (HHTK…SDGS), 256–296 (HHDA…NKAA), 300–340 (KESR…TPIS), 344–384 (SHCD…DDLS), and 401–441 (GHSS…SNDE).

Belongs to the WD repeat RBAP46/RBAP48/MSI1 family. In terms of assembly, component of the HAT-B complex composed of at least HAT1 and HAT2. The HAT-B complex binds to histone H4 tail.

The protein resides in the cytoplasm. It is found in the nucleus. Functionally, regulatory subunit of the histone acetylase B (HAT-B) complex. The complex acetylates 'Lys-12' of histone H4 which is required for telomeric silencing. This Yarrowia lipolytica (strain CLIB 122 / E 150) (Yeast) protein is Histone acetyltransferase type B subunit 2 (HAT2).